The primary structure comprises 476 residues: UPF0481 protein At3g47200 (476 aa).

Residues 1–24 are disordered; it reads MADKTDIISSSSDKASPPPPSAFR. A run of 2 helical transmembrane segments spans residues 133 to 153 and 439 to 459; these read LMFM…IMSG and AVLF…LSYL.

Belongs to the UPF0481 family.

The protein resides in the membrane. This chain is UPF0481 protein At3g47200, found in Arabidopsis thaliana (Mouse-ear cress).